Consider the following 354-residue polypeptide: Ferrochelatase (354 aa).

Fe cation-binding residues include His-214 and Glu-295.

The protein belongs to the ferrochelatase family.

It is found in the cytoplasm. It carries out the reaction heme b + 2 H(+) = protoporphyrin IX + Fe(2+). The protein operates within porphyrin-containing compound metabolism; protoheme biosynthesis; protoheme from protoporphyrin-IX: step 1/1. In terms of biological role, catalyzes the ferrous insertion into protoporphyrin IX. The chain is Ferrochelatase from Burkholderia cenocepacia (strain HI2424).